A 122-amino-acid polypeptide reads, in one-letter code: Autophagy-related protein 8e (122 aa).

Residue Gly118 is the site of Phosphatidylethanolamine amidated glycine attachment. A propeptide spans Ala119 to Ile122 (removed in mature form).

Belongs to the ATG8 family. As to quaternary structure, interacts with ATG4. Interacts with SH3P2. Interacts with ATG1A and ATG11. Binds to ATG1A and ATG11 on autophagic vesicles. In terms of processing, the C-terminal 4 residues are removed by ATG4 to expose Gly-118 at the C-terminus. This Gly-118 forms then a thioester bond with the 'Cys-558' of ATG7 (E1-like activating enzyme) before being transferred to the 'Cys-258' of ATG3 (the specific E2 conjugating enzyme), in order to be finally amidated with phosphatidylethanolamine. This lipid modification anchors ATG8 to autophagosomes. In terms of tissue distribution, constitutively expressed.

The protein resides in the cytoplasmic vesicle. Its subcellular location is the autophagosome membrane. It is found in the vacuole membrane. The protein localises to the cytoplasm. It localises to the cytoskeleton. Ubiquitin-like modifier involved in autophagosomes formation. May mediate the delivery of the autophagosomes to the vacuole via the microtubule cytoskeleton. The sequence is that of Autophagy-related protein 8e (ATG8E) from Arabidopsis thaliana (Mouse-ear cress).